The following is a 1128-amino-acid chain: MMEEENTIRPHQEIRQLTLEEKKFLLAVERGDMAGTRRMLQKAQDTEYINVNCVDPLGRTALLMAIDNENLEMVELLINYNVDTKDALLHSISEEFVEAVEVLLDHENVTFHSEGNHSWESASEDTSTFTPDITPLILAAHRDNYEIIKILLDRGAVLPMPHDVRCGCDECVQSRQEDSLRHSRSRINAYRALASPSLIALSSKDPILTAFELSWELRRLSFLEHEFKNEYQELRKQCQDFATALLDHTRTSHELEILLNHDPTGPVYEHGERMHLNRLKLAIKLRQKKFVAHSNVQQLLASIWYEGLPGFRRKNMALQAVDIIRIGIMFPIFSLAYILAPYSSIGQTMRKPFIKFICHSASYFTFLFLLMLASQRIETFIGGWFFADSSGMLNTMEELPTKRGAKPTFIEWLILAWVSGLIWSEVKQLWDVGLQEYLNDMWNVIDFVTNSLYVATVALRVVSFFQVQKEMIYNSHATDLPRERWDAWDPMLISEGLFSAANIFSSLKLVYIFSVNPHLGPLQVSLSRMVMDIMKFFFLYVLVLFAFGSGLNQLLWYYADLEKKRCPEVSPMSALLNMNGTNDPNACIVWRRFSNLFETTQTLFWAVFGLIDLDSFELDGIKIFTRFWGMLMFGTYSVINIVVLLNLLIAMMNHSYQLISERADVEWKFARSKLWISYFEEGGTCPPPFNIIPTPKSIWYAIKWMRRVFCSGSSAARREHLKTIRRKAQQASDRDFKYQQIMRNLVRRYVTVEQRKAESQGVTEDDVNEIKQDISAFRCELVEILKNSGMDTNVTAGQGGGGGGKKNRQKERRLMKGFNIAPPGSTGSLAPVAEFSTSLDNYDNQHEILSSTLSTLFTPNFMHKRQQSQAGSGGGGSESPTTPTAPQGTQGAAMTASSQVTKYNKSALKPYNKRIAGHKKRWGTLIEAAKVGNVSKMLGRSKSEDSVCNSSHTSTPVHGQMRVTYAQNSPQQEYGYHGETSSTTISTPTPTISVVSNSPAAHAGVGSHFFHTTSGLTAIAALKRKRKKFSSSKNICPVTESVAAANAAEILNDKTLKRVSSYPAAEAGVQHNPAQLVKPRRHEQTQSQHDSVETNSTFTLSIDPSNTSVNSREPLISTSCVSTTGAIG.

Over 1–325 (MMEEENTIRP…MALQAVDIIR (325 aa)) the chain is Cytoplasmic. 2 ANK repeats span residues 57–86 (LGRTALLMAIDNENLEMVELLINYNVDTKD) and 131–160 (PDITPLILAAHRDNYEIIKILLDRGAVLPM). The chain crosses the membrane as a helical span at residues 326–346 (IGIMFPIFSLAYILAPYSSIG). At 347–403 (QTMRKPFIKFICHSASYFTFLFLLMLASQRIETFIGGWFFADSSGMLNTMEELPTKR) the chain is on the extracellular side. A helical membrane pass occupies residues 404 to 424 (GAKPTFIEWLILAWVSGLIWS). The Cytoplasmic segment spans residues 425–444 (EVKQLWDVGLQEYLNDMWNV). Residues 445–465 (IDFVTNSLYVATVALRVVSFF) form a helical membrane-spanning segment. Topologically, residues 466–492 (QVQKEMIYNSHATDLPRERWDAWDPML) are extracellular. Residues 493–513 (ISEGLFSAANIFSSLKLVYIF) form a helical membrane-spanning segment. The Cytoplasmic portion of the chain corresponds to 514-535 (SVNPHLGPLQVSLSRMVMDIMK). A helical transmembrane segment spans residues 536-556 (FFFLYVLVLFAFGSGLNQLLW). The Extracellular portion of the chain corresponds to 557–629 (YYADLEKKRC…GIKIFTRFWG (73 aa)). A helical membrane pass occupies residues 630 to 650 (MLMFGTYSVINIVVLLNLLIA). Over 651–1128 (MMNHSYQLIS…SCVSTTGAIG (478 aa)) the chain is Cytoplasmic. Disordered stretches follow at residues 865-898 (RQQSQAGSGGGGSESPTTPTAPQGTQGAAMTASS) and 1064-1111 (AAEA…SVNS). Residues 878–893 (ESPTTPTAPQGTQGAA) are compositionally biased toward low complexity. Over residues 1085–1111 (TQSQHDSVETNSTFTLSIDPSNTSVNS) the composition is skewed to polar residues.

The protein belongs to the transient receptor (TC 1.A.4) family. STrpC subfamily. As to quaternary structure, interacts preferentially with trpl and interacts to a lower extent with trp. Expressed predominantly in the rhabdomeres of photoreceptor cells.

It is found in the cell projection. The protein localises to the rhabdomere membrane. Its function is as follows. A light-sensitive calcium channel that is required for inositide-mediated Ca(2+) entry in the retina during phospholipase C (PLC)-mediated phototransduction. Forms a regulated cation channel when heteromultimerized with trpl. This Drosophila melanogaster (Fruit fly) protein is Transient receptor potential-gamma protein (Trpgamma).